Consider the following 95-residue polypeptide: uncharacterized protein (95 aa).

This is an uncharacterized protein from Haemophilus influenzae (strain ATCC 51907 / DSM 11121 / KW20 / Rd).